The primary structure comprises 144 residues: MVQGTLEVLLVGAKGLENTDYLCNMDPYAVLKCRSQEQKSSVASGKGSDPEWNETFMFSVTHNATELIIKLMDSDSGTDDDFVGEATISLEAIYTEGSIPPTVYNVVKEEEYRGEIKVGLTFTPEDDRDRGLSEEDIGGWKQSS.

The C2 domain occupies 1–103 (MVQGTLEVLL…YTEGSIPPTV (103 aa)). Ca(2+) contacts are provided by Asp-20, Asp-26, Asp-73, Asp-75, and Asp-81. Positions 123–144 (TPEDDRDRGLSEEDIGGWKQSS) are disordered.

It depends on Ca(2+) as a cofactor.

This chain is Elicitor-responsive protein 3 (ERG3), found in Oryza sativa subsp. indica (Rice).